The sequence spans 86 residues: Omega-theraphotoxin-Hhn1a 2 (86 aa).

The first 21 residues, 1–21 (MKSIVFVALLGLALLAVVCSA), serve as a signal peptide directing secretion. Residues 22–50 (SEDAHKELLKEVVRAMVVDKTDAVQAEER) constitute a propeptide that is removed on maturation. 3 disulfides stabilise this stretch: Cys-52-Cys-66, Cys-59-Cys-71, and Cys-65-Cys-78.

The protein belongs to the neurotoxin 10 (Hwtx-1) family. 17 (Hntx-9) subfamily. Expressed by the venom gland.

It is found in the secreted. Its function is as follows. Ion channel inhibitor. This Cyriopagopus hainanus (Chinese bird spider) protein is Omega-theraphotoxin-Hhn1a 2.